The primary structure comprises 237 residues: Chalcone--flavanone isomerase (237 aa).

Positions 50 and 192 each coordinate substrate.

The protein belongs to the chalcone isomerase family.

It catalyses the reaction a chalcone = a flavanone.. The protein operates within secondary metabolite biosynthesis; flavonoid biosynthesis. In terms of biological role, catalyzes the intramolecular cyclization of bicyclic chalcones into tricyclic (S)-flavanones. Responsible for the isomerization of 4,2',4',6'-tetrahydroxychalcone (also termed chalcone) into naringenin. The protein is Chalcone--flavanone isomerase (CHI) of Callistephus chinensis (China aster).